Consider the following 963-residue polypeptide: MSPNVQKRPSSEDIKTQEFYDSTRNIRRVATAIGSINANLESPQLYSLAKSTSLQEPVRIYGDSVSPAISSSKAHSTSSVSPYYSEKNESQALNADGTAFANPSFHSFGLPQEDSQDNTQTYSTPYTTMNPSNEMHPYPPATFENNYSVLPDHSSQPNAYSFTGSNILPTQSPSLNQMQDYQNLQQNGSSNTTIPSFSSQHDLSQGLTHQPVPNHDEYAFSYPYELQRKPLIPAHPVPSFRPTSALKVNMNSNVPSSDSVRNSSPNQYYASTSKQSIPSQSQNLQPPQKASVLGTVNNYRQYQNSFISLNDYQAAQSNISSPSSRFPTPYSPSVPFGTYQEKEKSYSQDHAELSYYQQSPSMMPPYDRSSVYFQQPLSRTDVPNQSFQQYPTTVDGGSMIPNLYPTSAEQMGLYPQDSQNKDTYPKSLVNRPSSAVCEPARNDSIPMMVYSQPVTIEQRIQYVLSNCHCLSAFYLCMPSLCQKSYGTERRYLCPPIVLYLLGTTWLNNVTDNLKISAQTLEDKDNPKFAKNIFYYNADGALISPETDIAKSTYQLTNYNENTNFDSFPVWGNALLKTIYYTGQGKNDGFGRSTFLQLSVQSKTKYFKLENLRLGVISKPSQKRALMKVSDMSIRHGDCVCLFNRYRAQHNNALFLGTSNVQRAISKVSLNMKYNSNYFPTTDAPNDAENEGAGLAMANNLWEPFYIFSVDELNKGNNSNPSDSRSKVLCSNMVIILVSKITGVQSPPLILKKHDNWKVSLSSRAPSEAINCLSKLAFQCHETKRFLYIDEKQSSEISFTSGELEYSDPNDPTKATHSVLPWSAMWSIISTQSVRTMFYNEPIHQNAFHVVPSMPFVKFIRLDENSMFHIYGTGFANDVQIWMAYTRCEVKSINAFKPDTTLPPDIISDSRFSSRVYACTANLIELICEIPVCMFEPTVELSPILLFQYETLFHSGYKWPLESH.

2 disordered regions span residues 130–207 and 248–289; these read NPSN…SQGL and VNMN…PPQK. 2 stretches are compositionally biased toward polar residues: residues 143 to 207 and 249 to 289; these read FENN…SQGL and NMNS…PPQK.

It belongs to the Su(H) family.

It is found in the nucleus. In terms of biological role, transcription factor which function may be to trigger the increase of adhesion at stationary phase, possibly by counteracting or replacing cbf11 at the respective promoters. May also play a cbf11-antagonistic role in the regulation of a number of other important processes such as extracellular material production, colony morphogenesis, ploidy maintenance, or meiosis. This chain is Transcription factor cbf12 (cbf12), found in Schizosaccharomyces pombe (strain 972 / ATCC 24843) (Fission yeast).